The chain runs to 141 residues: VLSPADKKNVKAAWDKVGGHAGEYGAEALERMFLSFPTTKTYFPHFNLSHGSDQVKGHGKKVADALTLAVGHVDDMPQALSKLSDLHAHKLRVDPVNFKLLSHCLLVTLAAHLPAEFTPAVHASLDKFLASVSTVLTSKYR.

A Globin domain is found at 1–141 (VLSPADKKNV…VSTVLTSKYR (141 aa)). Ser-3 is modified (phosphoserine). An N6-succinyllysine mark is found at Lys-7 and Lys-11. Lys-16 carries the N6-acetyllysine; alternate modification. Position 16 is an N6-succinyllysine; alternate (Lys-16). Tyr-24 bears the Phosphotyrosine mark. Ser-35 is modified (phosphoserine). At Lys-40 the chain carries N6-succinyllysine. Ser-49 is modified (phosphoserine). His-58 lines the O2 pocket. His-87 is a binding site for heme b. Ser-102 carries the post-translational modification Phosphoserine. Thr-108 is subject to Phosphothreonine. Phosphoserine is present on residues Ser-124 and Ser-131. A phosphothreonine mark is found at Thr-134 and Thr-137. Ser-138 carries the phosphoserine modification.

The protein belongs to the globin family. As to quaternary structure, heterotetramer of two alpha chains and two beta chains. In terms of tissue distribution, red blood cells.

Its function is as follows. Involved in oxygen transport from the lung to the various peripheral tissues. The chain is Hemoglobin subunit alpha-1/2 from Mandrillus sphinx (Mandrill).